A 199-amino-acid polypeptide reads, in one-letter code: Probable chemoreceptor glutamine deamidase CheD (199 aa).

The protein belongs to the CheD family.

The catalysed reaction is L-glutaminyl-[protein] + H2O = L-glutamyl-[protein] + NH4(+). Functionally, probably deamidates glutamine residues to glutamate on methyl-accepting chemotaxis receptors (MCPs), playing an important role in chemotaxis. This is Probable chemoreceptor glutamine deamidase CheD from Cereibacter sphaeroides (strain ATCC 17023 / DSM 158 / JCM 6121 / CCUG 31486 / LMG 2827 / NBRC 12203 / NCIMB 8253 / ATH 2.4.1.) (Rhodobacter sphaeroides).